The primary structure comprises 172 residues: Ly6/PLAUR domain-containing protein 6B (172 aa).

Positions 1-25 are cleaved as a signal peptide; that stretch reads MLLLCHILAVTILQILIISENWVFA. Residues 46 to 137 enclose the UPAR/Ly6 domain; it reads FKCFTCENAG…VELPTNHTNA (92 aa). The sufficient for inhibiting alpha-7 nAChR currents stretch occupies residues 46–140; that stretch reads FKCFTCENAG…PTNHTNAVFA (95 aa). Cystine bridges form between Cys48–Cys76, Cys51–Cys60, Cys69–Cys95, Cys101–Cys120, Cys106–Cys117, and Cys121–Cys126. Ser148 is lipidated: GPI-anchor amidated serine. The propeptide at 149–172 is removed in mature form; that stretch reads GSSVSSVPSPYLLVLAWLFMLPLL.

The protein localises to the cell membrane. In terms of biological role, likely acts as a modulator of nicotinic acetylcholine receptors (nAChRs) activity. In vitro acts on nAChRs in a subtype- and stoichiometry-dependent manner. Modulates specifically alpha-3(3):beta-4(2) nAChRs by enhancing the sensitivity to ACh, decreasing ACh-induced maximal current response and increasing the rate of desensitization to ACh; has no effect on alpha-7 homomeric nAChRs; modulates alpha-3(2):alpha-5:beta-4(2) nAChRs in the context of CHRNA5/alpha-5 variant Asn-398 but not its wild-type sequence. However, according to another report in vitro it can weakly inhibits alpha-7 nAChRs. This is Ly6/PLAUR domain-containing protein 6B (Lypd6b) from Mus musculus (Mouse).